A 278-amino-acid polypeptide reads, in one-letter code: Large ribosomal subunit protein uL2 (278 aa).

The segment at 224-262 (VMNPVDHPLGGGEGRTSGGRHPVTPWGKPTKGFKTRKTR) is disordered.

It belongs to the universal ribosomal protein uL2 family. In terms of assembly, part of the 50S ribosomal subunit. Forms a bridge to the 30S subunit in the 70S ribosome.

Functionally, one of the primary rRNA binding proteins. Required for association of the 30S and 50S subunits to form the 70S ribosome, for tRNA binding and peptide bond formation. It has been suggested to have peptidyltransferase activity; this is somewhat controversial. Makes several contacts with the 16S rRNA in the 70S ribosome. The sequence is that of Large ribosomal subunit protein uL2 from Leptospira biflexa serovar Patoc (strain Patoc 1 / Ames).